The sequence spans 384 residues: PqqA peptide cyclase (384 aa).

In terms of domain architecture, Radical SAM core spans 15 to 231 (PGPPLWLLAE…NQWRDKLAAE (217 aa)). [4Fe-4S] cluster is bound by residues cysteine 29, cysteine 33, and cysteine 36.

This sequence belongs to the radical SAM superfamily. PqqE family. As to quaternary structure, interacts with PqqD. The interaction is necessary for activity of PqqE. It depends on [4Fe-4S] cluster as a cofactor.

It carries out the reaction [PQQ precursor protein] + S-adenosyl-L-methionine = E-Y cross-linked-[PQQ precursor protein] + 5'-deoxyadenosine + L-methionine + H(+). It participates in cofactor biosynthesis; pyrroloquinoline quinone biosynthesis. Its function is as follows. Catalyzes the cross-linking of a glutamate residue and a tyrosine residue in the PqqA protein as part of the biosynthesis of pyrroloquinoline quinone (PQQ). The polypeptide is PqqA peptide cyclase (Ectopseudomonas mendocina (strain ymp) (Pseudomonas mendocina)).